The following is a 524-amino-acid chain: Putative UDP-glucuronosyltransferase ugt-56 (524 aa).

An N-terminal signal peptide occupies residues 1–20 (MLWAFIVWLGALCIYGSAFD). N-linked (GlcNAc...) asparagine glycosylation is found at asparagine 125, asparagine 277, and asparagine 335. The chain crosses the membrane as a helical span at residues 488 to 508 (LIDSSIALVFMLFIFVFVNHF).

This sequence belongs to the UDP-glycosyltransferase family.

It localises to the membrane. It catalyses the reaction glucuronate acceptor + UDP-alpha-D-glucuronate = acceptor beta-D-glucuronoside + UDP + H(+). This is Putative UDP-glucuronosyltransferase ugt-56 (ugt-56) from Caenorhabditis elegans.